Reading from the N-terminus, the 130-residue chain is Small ribosomal subunit protein uS8 (130 aa).

Belongs to the universal ribosomal protein uS8 family. Part of the 30S ribosomal subunit. Contacts proteins S5 and S12.

In terms of biological role, one of the primary rRNA binding proteins, it binds directly to 16S rRNA central domain where it helps coordinate assembly of the platform of the 30S subunit. This is Small ribosomal subunit protein uS8 from Coxiella burnetii (strain RSA 331 / Henzerling II).